Reading from the N-terminus, the 229-residue chain is Enolase-phosphatase E1 (229 aa).

This sequence belongs to the HAD-like hydrolase superfamily. MasA/MtnC family. Monomer. It depends on Mg(2+) as a cofactor.

It catalyses the reaction 5-methylsulfanyl-2,3-dioxopentyl phosphate + H2O = 1,2-dihydroxy-5-(methylsulfanyl)pent-1-en-3-one + phosphate. It participates in amino-acid biosynthesis; L-methionine biosynthesis via salvage pathway; L-methionine from S-methyl-5-thio-alpha-D-ribose 1-phosphate: step 3/6. It functions in the pathway amino-acid biosynthesis; L-methionine biosynthesis via salvage pathway; L-methionine from S-methyl-5-thio-alpha-D-ribose 1-phosphate: step 4/6. In terms of biological role, bifunctional enzyme that catalyzes the enolization of 2,3-diketo-5-methylthiopentyl-1-phosphate (DK-MTP-1-P) into the intermediate 2-hydroxy-3-keto-5-methylthiopentenyl-1-phosphate (HK-MTPenyl-1-P), which is then dephosphorylated to form the acireductone 1,2-dihydroxy-3-keto-5-methylthiopentene (DHK-MTPene). This is Enolase-phosphatase E1 from Citrobacter koseri (strain ATCC BAA-895 / CDC 4225-83 / SGSC4696).